Here is a 301-residue protein sequence, read N- to C-terminus: Oxygen-dependent coproporphyrinogen-III oxidase (301 aa).

Serine 94 contacts substrate. Residues histidine 98 and histidine 108 each coordinate a divalent metal cation. Residue histidine 108 is the Proton donor of the active site. Position 110 to 112 (110 to 112 (NVR)) interacts with substrate. Residues histidine 147 and histidine 177 each coordinate a divalent metal cation. Positions 242 to 277 (YVEFNLVYDRGTLFGLQSGGRTESILMSMPPLARWE) are important for dimerization. 260 to 262 (GGR) is a binding site for substrate.

Belongs to the aerobic coproporphyrinogen-III oxidase family. In terms of assembly, homodimer. A divalent metal cation is required as a cofactor.

The protein resides in the cytoplasm. The enzyme catalyses coproporphyrinogen III + O2 + 2 H(+) = protoporphyrinogen IX + 2 CO2 + 2 H2O. The protein operates within porphyrin-containing compound metabolism; protoporphyrin-IX biosynthesis; protoporphyrinogen-IX from coproporphyrinogen-III (O2 route): step 1/1. Its function is as follows. Involved in the heme biosynthesis. Catalyzes the aerobic oxidative decarboxylation of propionate groups of rings A and B of coproporphyrinogen-III to yield the vinyl groups in protoporphyrinogen-IX. In Photobacterium profundum (strain SS9), this protein is Oxygen-dependent coproporphyrinogen-III oxidase.